A 60-amino-acid polypeptide reads, in one-letter code: Large ribosomal subunit protein eL37 (60 aa).

The Zn(2+) site is built by Cys18, Cys21, Cys33, and Cys36. The C4-type zinc-finger motif lies at 18–36 (CRRCGKNSYHVRKKVCAAC).

This sequence belongs to the eukaryotic ribosomal protein eL37 family. The cofactor is Zn(2+).

Its function is as follows. Binds to the 23S rRNA. The chain is Large ribosomal subunit protein eL37 (rpl37e) from Methanothermobacter thermautotrophicus (strain ATCC 29096 / DSM 1053 / JCM 10044 / NBRC 100330 / Delta H) (Methanobacterium thermoautotrophicum).